The following is a 555-amino-acid chain: 5'-nucleotidase-related protein (555 aa).

Positions 1–25 (MKSLIGTLGLYCLFILTNNVVSSYG) are cleaved as a signal peptide. A divalent metal cation contacts are provided by Asp38, His40, and Asp91. Asn105 carries N-linked (GlcNAc...) asparagine glycosylation. Residue Asn123 coordinates a divalent metal cation. N-linked (GlcNAc...) asparagine glycosylation occurs at Asn198. Residues His225 and His249 each contribute to the a divalent metal cation site. Asn295 carries an N-linked (GlcNAc...) asparagine glycan. AMP is bound by residues Arg358, Arg402, and Phe421. Asn465 is a glycosylation site (N-linked (GlcNAc...) asparagine). Positions 505 and 511 each coordinate AMP.

Belongs to the 5'-nucleotidase family. The cofactor is Mg(2+). It depends on Mn(2+) as a cofactor. Salivary gland (at protein level). Saliva (at protein level).

Its subcellular location is the secreted. The enzyme catalyses a ribonucleoside 5'-triphosphate + 2 H2O = a ribonucleoside 5'-phosphate + 2 phosphate + 2 H(+). DEPC (2 mM), sodium fluoride (10 mM) and 4,4'-Diisothiocyano-2,2'-stilbenedisulfonic acid (DIDS, 100 uM) nearly completely abrogate activity. Concanavalin A enhances activity. In terms of biological role, facilitates hematophagy by inhibiting ADP-dependent platelet aggregation and promoting disaggregation of ADP-stimulated platelets in the host. Cleaves adenosine triphosphate (ATP) and adenosine diphosphate (ADP) to adenosine monophosphate (AMP) and inorganic phosphate. Interacts with fibrinogen receptor integrin alpha-IIb/beta-3 (ITGA2B/ITGB3). This chain is 5'-nucleotidase-related protein, found in Glossina morsitans morsitans (Savannah tsetse fly).